The primary structure comprises 1526 residues: Cell wall protein IFF4 (1526 aa).

Residues 1-20 (MKFLQKFIITVALLTNIVFA) form the signal peptide. N-linked (GlcNAc...) asparagine glycosylation is found at Asn-93 and Asn-498. The disordered stretch occupies residues 512-541 (SSAGGSSFPEETHMLQTSDSDLSSTAGSES). Positions 525–541 (MLQTSDSDLSSTAGSES) are enriched in polar residues. Asn-637 carries N-linked (GlcNAc...) asparagine glycosylation. The tract at residues 1180 to 1207 (WNGAKSDSPHTSESDITSQYNSHSTSVA) is disordered. The segment covering 1193–1207 (SDITSQYNSHSTSVA) has biased composition (polar residues). N-linked (GlcNAc...) asparagine glycosylation is found at Asn-1451, Asn-1463, Asn-1479, Asn-1502, and Asn-1506. The disordered stretch occupies residues 1455–1483 (SSVSGYPTNRSDSNGYANTPTTGSNTSGD). Residue Asn-1502 is the site of GPI-anchor amidated asparagine attachment. A propeptide spans 1503–1526 (GSTNISNKYLKFLGTVVSILILLI) (removed in mature form).

This sequence belongs to the HYR1/IFF family. The GPI-anchor is attached to the protein in the endoplasmic reticulum and serves to target the protein to the cell surface. There, the glucosamine-inositol phospholipid moiety is cleaved off and the GPI-$modified mannoprotein is covalently attached via its lipidless GPI glycan remnant to the 1,6-beta-glucan of the outer cell wall layer.

The protein resides in the secreted. The protein localises to the cell wall. Its subcellular location is the membrane. Functionally, GPI-anchored cell wall protein involved in cell wall organization, hyphal growth, as well as in host-fungal interaction and virulence. Plays a role in adherence to plastic and to host epithelial cells. Promotes the tissue fungal burden during murine vaginal candidiasis. Also increases susceptibility to neutrophil-mediated killing. Furthermore, contributes to the severity of hematogenously disseminated candidiasis in normal mice, but not in neutropenic mice. The sequence is that of Cell wall protein IFF4 (IFF4) from Candida albicans (strain SC5314 / ATCC MYA-2876) (Yeast).